The following is a 530-amino-acid chain: ATP synthase subunit alpha (530 aa).

Residue 169–176 participates in ATP binding; sequence GDRQTGKT.

It belongs to the ATPase alpha/beta chains family. F-type ATPases have 2 components, CF(1) - the catalytic core - and CF(0) - the membrane proton channel. CF(1) has five subunits: alpha(3), beta(3), gamma(1), delta(1), epsilon(1). CF(0) has three main subunits: a(1), b(2) and c(9-12). The alpha and beta chains form an alternating ring which encloses part of the gamma chain. CF(1) is attached to CF(0) by a central stalk formed by the gamma and epsilon chains, while a peripheral stalk is formed by the delta and b chains.

The protein localises to the cell membrane. It carries out the reaction ATP + H2O + 4 H(+)(in) = ADP + phosphate + 5 H(+)(out). Its function is as follows. Produces ATP from ADP in the presence of a proton gradient across the membrane. The alpha chain is a regulatory subunit. The protein is ATP synthase subunit alpha of Mycoplasmopsis synoviae (strain 53) (Mycoplasma synoviae).